A 547-amino-acid polypeptide reads, in one-letter code: Protein RBL (547 aa).

WD repeat units lie at residues 21-60 (LEHG…IAKE), 65-104 (DCSA…KIAR), 214-253 (SGAA…KNVL), 285-332 (EFQD…VKIL), and 334-373 (GPKE…NWSA). The segment at 466-547 (SPASEEAGQN…GGDDDDDAYY (82 aa)) is disordered. Residues 499 to 511 (SEKAMELQAEKAK) show a composition bias toward basic and acidic residues. The span at 530 to 547 (QETDDSINGGDDDDDAYY) shows a compositional bias: acidic residues.

As to quaternary structure, part of a complex composed of TRO, RBL and WDR5A. Interacts with TRO and WDR5A, but not with WDR5B. This complex is formed during both vegetative and reproductive development. As to expression, strongly expressed in root tips, shoot apices, vascular tissues, developing embryos and endosperms.

It localises to the nucleus. Its function is as follows. Promotes the expression of FLC and FLC homologs to repress the floral transition. Promotes WRKY70 and LTP7 genes epigenetic methylation (e.g. H3K4me3) and subsequent expression. The sequence is that of Protein RBL from Arabidopsis thaliana (Mouse-ear cress).